The following is a 1816-amino-acid chain: Kinesin-like protein KIF1B (1816 aa).

S2 bears the N-acetylserine mark. The Kinesin motor domain maps to S5–I354. G97–S104 provides a ligand contact to ATP. Residues N270–R350 form an interaction with KIFBP region. The disordered stretch occupies residues F431–S450. Residues S432–S450 show a composition bias toward low complexity. The stretch at G470–M512 forms a coiled coil. An FHA domain is found at T556–V612. 2 positions are modified to phosphothreonine: T647 and T652. Positions I672 to E731 form a coiled coil. Residues S1054, S1057, S1416, S1454, and S1487 each carry the phosphoserine modification. A disordered region spans residues S1550–D1570. 4 positions are modified to phosphoserine: S1573, S1603, S1610, and S1613. A compositionally biased stretch (low complexity) spans S1620 to S1637. The interval S1620–S1659 is disordered. A compositionally biased stretch (polar residues) spans D1640–S1659. The PH domain maps to V1701–A1799.

Belongs to the TRAFAC class myosin-kinesin ATPase superfamily. Kinesin family. Unc-104 subfamily. Monomer. Interacts with KIFBP; positively regulates KIF1B microtubule motor activity. Interacts (via C-terminus end of the kinesin-motor domain) with CHP1; the interaction occurs in a calcium-dependent manner. Interacts with MADD (via death domain); links this isoform of KIF1B to Rab3-carrying vesicles in anterograde synaptic vesicle transport. In terms of tissue distribution, expressed in the brain with lower expression in testis and liver (at protein level). Strongly expressed in the brain and ovary, with lower expression in lung, kidney, uterus, testis and liver. Isoform 2 is expressed in non-neuronal tissues.

It is found in the cytoplasm. It localises to the cytoskeleton. The protein resides in the cytoplasmic vesicle. The protein localises to the secretory vesicle. Its subcellular location is the synaptic vesicle membrane. It is found in the lysosome. It catalyses the reaction ATP + H2O + a kinesin associated with a microtubule at position (n) = ADP + phosphate a kinesin associated with a microtubule at position (n+1, toward the plus end).. In terms of biological role, has a plus-end-directed microtubule motor activity and functions as a motor for transport of vesicles and organelles along microtubules. Has a plus-end-directed microtubule motor activity and functions as a motor for anterograde synaptic vesicle transport along axonal microtubules from the cell body to the presynapse in neuronal cells. Its function is as follows. Has a plus-end-directed microtubule motor activity and functions as a motor for the translocation of lysosomes from perinuclear regions to the cell periphery. The chain is Kinesin-like protein KIF1B from Rattus norvegicus (Rat).